The sequence spans 155 residues: Small ribosomal subunit protein uS7cz/uS7cy (155 aa).

This sequence belongs to the universal ribosomal protein uS7 family. As to quaternary structure, part of the 30S ribosomal subunit.

Its subcellular location is the plastid. It localises to the chloroplast. Its function is as follows. One of the primary rRNA binding proteins, it binds directly to 16S rRNA where it nucleates assembly of the head domain of the 30S subunit. This chain is Small ribosomal subunit protein uS7cz/uS7cy (rps7-A), found in Morus indica (Mulberry).